The primary structure comprises 344 residues: Phenylalanine--tRNA ligase alpha subunit (344 aa).

Glu256 contributes to the Mg(2+) binding site.

The protein belongs to the class-II aminoacyl-tRNA synthetase family. Phe-tRNA synthetase alpha subunit type 1 subfamily. In terms of assembly, tetramer of two alpha and two beta subunits. Mg(2+) serves as cofactor.

Its subcellular location is the cytoplasm. The catalysed reaction is tRNA(Phe) + L-phenylalanine + ATP = L-phenylalanyl-tRNA(Phe) + AMP + diphosphate + H(+). In Bacillus subtilis (strain 168), this protein is Phenylalanine--tRNA ligase alpha subunit (pheS).